Here is a 294-residue protein sequence, read N- to C-terminus: tRNA dimethylallyltransferase (294 aa).

10 to 17 (GPTAVGKT) contributes to the ATP binding site. Position 12–17 (12–17 (TAVGKT)) interacts with substrate. The tract at residues 35–38 (DSQQ) is interaction with substrate tRNA.

Belongs to the IPP transferase family. In terms of assembly, monomer. Mg(2+) is required as a cofactor.

The enzyme catalyses adenosine(37) in tRNA + dimethylallyl diphosphate = N(6)-dimethylallyladenosine(37) in tRNA + diphosphate. In terms of biological role, catalyzes the transfer of a dimethylallyl group onto the adenine at position 37 in tRNAs that read codons beginning with uridine, leading to the formation of N6-(dimethylallyl)adenosine (i(6)A). In Streptococcus suis (strain 98HAH33), this protein is tRNA dimethylallyltransferase.